Reading from the N-terminus, the 409-residue chain is Cdc42 effector protein 1 (409 aa).

Residues 1–29 are disordered; sequence MPGPQGGTGAPTMSLGKLSPVGWVSSSHG. Phosphoserine occurs at positions 19 and 27. Residue threonine 34 is modified to Phosphothreonine. A CRIB domain is found at 38–52; the sequence is ISPPLGDFRHTMHVG. Serine 39 is subject to Phosphoserine. At arginine 53 the chain carries Omega-N-methylarginine. A phosphoserine mark is found at serine 65, serine 77, serine 101, serine 113, serine 121, and serine 139. Basic and acidic residues predominate over residues 167–189; that stretch reads PRVEKHSNRDRDRDPDHSQDREQ. Residues 167 to 203 form a disordered region; it reads PRVEKHSNRDRDRDPDHSQDREQSSFPSEPTPNPELR. Residues serine 191, serine 205, serine 207, and serine 210 each carry the phosphoserine modification. 3 repeat units span residues 235–241, 242–248, and 255–261. The tract at residues 235–284 is 3 X 7 AA tandem repeats of [PT]-[AT]-A-[ENT]-[PT]-[PTS]-[AG]; the sequence is PAAETPVPTANPPAPAANPAPTAKPPAHAITTLDAVTSLPASAVTSLPAP. 2 disordered regions span residues 237–260 and 282–329; these read AETP…AKPP and PAPA…FDRH. The span at 243 to 258 shows a compositional bias: pro residues; the sequence is TANPPAPAANPAPTAK. The segment covering 282–291 has biased composition (low complexity); that stretch reads PAPAAASSPS. A phosphoserine mark is found at serine 312, serine 332, serine 368, and serine 371.

Belongs to the BORG/CEP family. As to quaternary structure, interacts with RHOQ and CDC42, in a GTP-dependent manner.

Its subcellular location is the endomembrane system. The protein resides in the cytoplasm. It is found in the cytoskeleton. Its function is as follows. Probably involved in the organization of the actin cytoskeleton. Induced membrane extensions in fibroblasts. This chain is Cdc42 effector protein 1 (Cdc42ep1), found in Mus musculus (Mouse).